Reading from the N-terminus, the 153-residue chain is MRAVVQRVLEASVTVEGQRVSDIGPGLLVLLGVGKGDTEADVAWMVEKLATLRIFEDAAGKMNLSLEETSRQLIVVSQFTLYGDARKGRRPSFIDAMEPVSAKALYERTCELLRQRGLSVGTGIFAADMKVALVNDGPVTLLLESPGPAAPKG.

The Gly-cisPro motif, important for rejection of L-amino acids motif lies at 137-138 (GP).

The protein belongs to the DTD family. As to quaternary structure, homodimer.

The protein localises to the cytoplasm. It carries out the reaction glycyl-tRNA(Ala) + H2O = tRNA(Ala) + glycine + H(+). It catalyses the reaction a D-aminoacyl-tRNA + H2O = a tRNA + a D-alpha-amino acid + H(+). An aminoacyl-tRNA editing enzyme that deacylates mischarged D-aminoacyl-tRNAs. Also deacylates mischarged glycyl-tRNA(Ala), protecting cells against glycine mischarging by AlaRS. Acts via tRNA-based rather than protein-based catalysis; rejects L-amino acids rather than detecting D-amino acids in the active site. By recycling D-aminoacyl-tRNA to D-amino acids and free tRNA molecules, this enzyme counteracts the toxicity associated with the formation of D-aminoacyl-tRNA entities in vivo and helps enforce protein L-homochirality. In Myxococcus xanthus (strain DK1622), this protein is D-aminoacyl-tRNA deacylase.